Reading from the N-terminus, the 438-residue chain is Adenosylhomocysteinase (438 aa).

The substrate site is built by Thr-64, Asp-139, and Glu-164. Position 165-167 (165-167 (TTT)) interacts with NAD(+). Lys-194 and Asp-198 together coordinate substrate. NAD(+) contacts are provided by residues Asn-199, 228 to 233 (GYGDVG), Glu-251, Asn-286, 307 to 309 (IGH), and Asn-352.

It belongs to the adenosylhomocysteinase family. NAD(+) is required as a cofactor.

It is found in the cytoplasm. It carries out the reaction S-adenosyl-L-homocysteine + H2O = L-homocysteine + adenosine. It participates in amino-acid biosynthesis; L-homocysteine biosynthesis; L-homocysteine from S-adenosyl-L-homocysteine: step 1/1. Its function is as follows. May play a key role in the regulation of the intracellular concentration of adenosylhomocysteine. In Coxiella burnetii (strain CbuK_Q154) (Coxiella burnetii (strain Q154)), this protein is Adenosylhomocysteinase.